Here is a 767-residue protein sequence, read N- to C-terminus: MTISPPERGSDAKSQVEKVDNPATFELFGKPGHFDRALAKGPKTTTWVWNLHANAHDFDAHTSDLQEVSRRIFSAHFGHLAVIFIWLSGAFFHGARFSNYSGWLADPTHVKPSAQQVWAVFGQEVLNGDMGAGFQGIQITSGLFQMWRAWGITSETQLMALAIGALVMAGLMLNAGVFHYHKAAPKLEWFQNVESMLNHHLAGLLGLGSLSWAGHVIHVSAPVTKLMDAIDAGQPLVLNGKTIASAADIPLPHEFFNQDLLAQLYPGFSAGVGAFFSGNWAAYSDFLTFKGGLNPVTGSLWMTDIAHHHVAIAVMFIVAGHMYRTNWGIGHSIKEIHEGQKGDPLLFPATNGHDGLYDFMTNSWHAQLAVNLAIGGSVSIIVAQHMYAMPPYPYQAIDYPTQIGLFTHHIWIGGFLIVGAGAHAAIAMVRDYDPAKHIDNVLDRVLKARDAIISHLNWVCIWLGAHSFGLYIHNDTMRALGRPQDMFSDSAISIQPIFAQWIQNVHAAAAGSTAPNALAGVSEVFNGSVVAVGGKVAAAPMPLGTADFMVHHIHAFTIHVTVLILLKGVLYARSSRLIPDKANLGFRFSCDGPGRGGTCQVSAWDHVFLGLFWMYNSLSIVIFHFSWKMQSDIWGTVNADGSVAHITNGNFAQSAITINGWLRDYLWAQAVQVINSYGSNTAAYGIMFLGAHFVFAFSLMFLFSGRGYWQELIESIVWAHNKLKVAPAIQPRALSIIQGRAVGVAHYLLGGIATTWAFFHAHILVVG.

8 helical membrane passes run 72–95 (IFSA…FHGA), 158–181 (LMAL…FHYH), 197–221 (LNHH…HVSA), 305–323 (IAHH…GHMY), 364–387 (WHAQ…QHMY), 403–429 (IGLF…IAMV), 451–473 (AIIS…LYIH), and 548–566 (FMVH…LILL). [4Fe-4S] cluster contacts are provided by C590 and C599. 2 helical membrane passes run 606-627 (HVFL…HFSW) and 681-703 (TAAY…MFLF). Position 692 (H692) interacts with chlorophyll a'. Chlorophyll a contacts are provided by M700 and Y708. W709 serves as a coordination point for phylloquinone. The chain crosses the membrane as a helical span at residues 741 to 761 (AVGVAHYLLGGIATTWAFFHA).

The protein belongs to the PsaA/PsaB family. In terms of assembly, the PsaA/B heterodimer binds the P700 chlorophyll special pair and subsequent electron acceptors. PSI consists of a core antenna complex that captures photons, and an electron transfer chain that converts photonic excitation into a charge separation. The cyanobacterial PSI reaction center is composed of one copy each of PsaA,B,C,D,E,F,I,J,K,L,M and X, and forms trimeric complexes. It depends on PSI electron transfer chain: 5 chlorophyll a, 1 chlorophyll a', 2 phylloquinones and 3 4Fe-4S clusters. PSI core antenna: 90 chlorophyll a, 22 carotenoids, 3 phospholipids and 1 galactolipid. P700 is a chlorophyll a/chlorophyll a' dimer, A0 is one or more chlorophyll a, A1 is one or both phylloquinones and FX is a shared 4Fe-4S iron-sulfur center. as a cofactor.

It localises to the cellular thylakoid membrane. The catalysed reaction is reduced [plastocyanin] + hnu + oxidized [2Fe-2S]-[ferredoxin] = oxidized [plastocyanin] + reduced [2Fe-2S]-[ferredoxin]. PsaA and PsaB bind P700, the primary electron donor of photosystem I (PSI), as well as the electron acceptors A0, A1 and FX. PSI is a plastocyanin/cytochrome c6-ferredoxin oxidoreductase, converting photonic excitation into a charge separation, which transfers an electron from the donor P700 chlorophyll pair to the spectroscopically characterized acceptors A0, A1, FX, FA and FB in turn. Oxidized P700 is reduced on the lumenal side of the thylakoid membrane by plastocyanin or cytochrome c6. The protein is Photosystem I P700 chlorophyll a apoprotein A1 of Synechococcus sp. (strain CC9605).